The chain runs to 704 residues: Polyribonucleotide nucleotidyltransferase (704 aa).

Residues Asp486 and Asp492 each coordinate Mg(2+). Residues Pro553 to Ile612 form the KH domain. An S1 motif domain is found at Gly622–Lys690.

The protein belongs to the polyribonucleotide nucleotidyltransferase family. As to quaternary structure, component of the RNA degradosome, which is a multiprotein complex involved in RNA processing and mRNA degradation. Requires Mg(2+) as cofactor.

It is found in the cytoplasm. It carries out the reaction RNA(n+1) + phosphate = RNA(n) + a ribonucleoside 5'-diphosphate. Its function is as follows. Involved in mRNA degradation. Catalyzes the phosphorolysis of single-stranded polyribonucleotides processively in the 3'- to 5'-direction. In Yersinia pseudotuberculosis serotype IB (strain PB1/+), this protein is Polyribonucleotide nucleotidyltransferase.